Reading from the N-terminus, the 746-residue chain is GTPase-activating protein GYP7 (746 aa).

Residues Ser265 and Ser339 each carry the phosphoserine modification. The region spanning 385–633 (LENDSLRGKV…HIWENFWTFY (249 aa)) is the Rab-GAP TBC domain. The tract at residues 470–505 (TIDGLPPPPQQLPANENNSTSPESANDESDDADDGV) is disordered. The span at 481 to 491 (LPANENNSTSP) shows a compositional bias: polar residues.

The protein localises to the cytoplasm. GTPase-activating protein (GAP) that most effectively accelerates the intrinsic GTPase activity of Ypt/Rab-type GTPase YPT7 involved in vacuole docking and fusion. It is also active, but to a lesser extent, on YPT31, YPT32, YPT1, YPT6 and SEC4. Provides a catalytic arginine (arginine finger) in trans to accelerate the GTP hydrolysis rate of the substrate GTPase. The polypeptide is GTPase-activating protein GYP7 (GYP7) (Saccharomyces cerevisiae (strain ATCC 204508 / S288c) (Baker's yeast)).